The primary structure comprises 618 residues: Glutathione-regulated potassium-efflux system protein (618 aa).

Helical transmembrane passes span 6-26 (NPEL…VPLF), 32-52 (GSVL…FGIV), 55-75 (PTAV…IIGL), 94-114 (LLQV…LLGL), 118-138 (VSFI…MQSL), 152-172 (VIST…SVAF), 186-206 (WVSI…GKWL), 227-247 (ALLV…SMAM), 274-294 (GLLL…HLVF), 298-318 (ILLL…VYII), 336-356 (MAHG…AEVI), and 362-382 (ATFT…AQIA). Residues 409 to 525 (EDNVLVIGFG…LIKQDVDFIV (117 aa)) form the RCK N-terminal domain.

This sequence belongs to the monovalent cation:proton antiporter 2 (CPA2) transporter (TC 2.A.37) family.

The protein resides in the cell inner membrane. Transport system that facilitate potassium-efflux, possibly by potassium-proton antiport. This Haemophilus influenzae (strain ATCC 51907 / DSM 11121 / KW20 / Rd) protein is Glutathione-regulated potassium-efflux system protein (kefBC).